The primary structure comprises 685 residues: DNA topoisomerase 4 subunit B (685 aa).

Over residues 389–400 (EAARKAREESRN) the composition is skewed to basic and acidic residues. A disordered region spans residues 389–427 (EAARKAREESRNGKKRKKGESLLSGKLTPAQSRNPKKNE). The 115-residue stretch at 426-540 (NELYLVEGDS…AGKVYIALPP (115 aa)) folds into the Toprim domain. Mg(2+)-binding residues include E432, D505, and D507. Composition is skewed to acidic residues over residues 644–654 (GSILDRSEEDT) and 673–685 (QTDD…FDIE). The interval 644–685 (GSILDRSEEDTSAPTGESLLDAEKTKEAEQTDDTEISLFDIE) is disordered.

The protein belongs to the type II topoisomerase family. ParE type 1 subfamily. In terms of assembly, heterotetramer composed of ParC and ParE. It depends on Mg(2+) as a cofactor. Mn(2+) is required as a cofactor. The cofactor is Ca(2+).

It carries out the reaction ATP-dependent breakage, passage and rejoining of double-stranded DNA.. Its activity is regulated as follows. Pyrrolopyrimidines inhibit both GyrB and its paralog in topoisomerase IV (parE). Functionally, topoisomerase IV is essential for chromosome segregation. It relaxes supercoiled DNA. Performs the decatenation events required during the replication of a circular DNA molecule. This Enterococcus faecalis (strain ATCC 700802 / V583) protein is DNA topoisomerase 4 subunit B.